The chain runs to 351 residues: Glycerol-1-phosphate dehydrogenase [NAD(P)+] (351 aa).

NAD(+) is bound by residues 97 to 101 and 119 to 122; these read GKVID and TSPS. Asp-124 contacts substrate. Residue Ser-128 coordinates NAD(+). A substrate-binding site is contributed by Asp-171. Zn(2+) is bound by residues Asp-171 and His-251. Position 255 (His-255) interacts with substrate. His-267 serves as a coordination point for Zn(2+).

The protein belongs to the glycerol-1-phosphate dehydrogenase family. As to quaternary structure, homodimer. Zn(2+) is required as a cofactor.

The protein localises to the cytoplasm. The catalysed reaction is sn-glycerol 1-phosphate + NAD(+) = dihydroxyacetone phosphate + NADH + H(+). The enzyme catalyses sn-glycerol 1-phosphate + NADP(+) = dihydroxyacetone phosphate + NADPH + H(+). The protein operates within membrane lipid metabolism; glycerophospholipid metabolism. In terms of biological role, catalyzes the NAD(P)H-dependent reduction of dihydroxyacetonephosphate (DHAP or glycerone phosphate) to glycerol 1-phosphate (G1P). The G1P thus generated is used as the glycerophosphate backbone of phospholipids in the cellular membranes of Archaea. The protein is Glycerol-1-phosphate dehydrogenase [NAD(P)+] of Saccharolobus solfataricus (strain ATCC 35092 / DSM 1617 / JCM 11322 / P2) (Sulfolobus solfataricus).